A 275-amino-acid polypeptide reads, in one-letter code: NH(3)-dependent NAD(+) synthetase (275 aa).

Gly-39–Ser-46 provides a ligand contact to ATP. Mg(2+) is bound at residue Asp-45. Residue Arg-124 participates in deamido-NAD(+) binding. Position 144 (Thr-144) interacts with ATP. Glu-149 serves as a coordination point for Mg(2+). Residues Lys-157 and Asp-164 each contribute to the deamido-NAD(+) site. ATP is bound by residues Lys-173 and Ser-195. His-255 to Lys-256 serves as a coordination point for deamido-NAD(+).

It belongs to the NAD synthetase family. Homodimer.

The catalysed reaction is deamido-NAD(+) + NH4(+) + ATP = AMP + diphosphate + NAD(+) + H(+). The protein operates within cofactor biosynthesis; NAD(+) biosynthesis; NAD(+) from deamido-NAD(+) (ammonia route): step 1/1. Its function is as follows. Catalyzes the ATP-dependent amidation of deamido-NAD to form NAD. Uses ammonia as a nitrogen source. In Staphylothermus marinus (strain ATCC 43588 / DSM 3639 / JCM 9404 / F1), this protein is NH(3)-dependent NAD(+) synthetase.